The following is a 172-amino-acid chain: Inorganic pyrophosphatase (172 aa).

Substrate is bound by residues Lys-26, Arg-40, and Tyr-52. Residues Asp-62, Asp-67, and Asp-99 each coordinate Mg(2+). Tyr-138 is a binding site for substrate.

Belongs to the PPase family. As to quaternary structure, homohexamer. It depends on Mg(2+) as a cofactor.

The protein localises to the cytoplasm. It catalyses the reaction diphosphate + H2O = 2 phosphate + H(+). Catalyzes the hydrolysis of inorganic pyrophosphate (PPi) forming two phosphate ions. The polypeptide is Inorganic pyrophosphatase (Saccharolobus solfataricus (strain ATCC 35092 / DSM 1617 / JCM 11322 / P2) (Sulfolobus solfataricus)).